Consider the following 619-residue polypeptide: Zinc finger and BTB domain-containing protein 7C (619 aa).

Residues 34 to 101 enclose the BTB domain; the sequence is CDVLLVVQEQ…AYTSTLTITA (68 aa). The segment at 129–218 is disordered; that stretch reads PGGDGGEEDD…DSFQAGSPGH (90 aa). Acidic residues predominate over residues 133-173; sequence GGEEDDKEDDDDDEDDDDEEDEEEEEEEEEDDDDDTEDFAD. Residues 191 to 208 show a composition bias toward basic and acidic residues; it reads KTDHLTEKAYSDTPRDFP. 3 C2H2-type zinc fingers span residues 364–386, 392–414, and 420–442; these read QQCP…MRTH, YMCT…MRKH, and YLCI…MRIH. The segment at 448–478 adopts a C2H2-type 4; degenerate zinc-finger fold; that stretch reads YQCEFCYKSFTRSDHLHRHIKRQSCRMARPR.

In terms of tissue distribution, detected in normal cervical keratinocytes, and in some cervical carcinoma cell lines.

Functionally, may be a tumor suppressor gene. This chain is Zinc finger and BTB domain-containing protein 7C (ZBTB7C), found in Homo sapiens (Human).